Here is a 2376-residue protein sequence, read N- to C-terminus: Reducing polyketide synthase DEP5 (2376 aa).

Residues 47-477 (LEPIAVVGMG…GTNAHTIIES (431 aa)) form the Ketosynthase family 3 (KS3) domain. Residues cysteine 221, histidine 358, and histidine 399 each act as for beta-ketoacyl synthase activity in the active site. Positions 593–906 (VFTGQGAQWA…QYLPTLVRGF (314 aa)) are malonyl-CoA:ACP transacylase (MAT) domain. Serine 685 functions as the For malonyltransferase activity in the catalytic mechanism. Positions 983-1121 (HDVLGQLTTG…GSIAIRTSAR (139 aa)) are N-terminal hotdog fold. The dehydratase (DH) domain stretch occupies residues 983–1158 (HDVLGQLTTG…FNYGPTFQDM (176 aa)). In terms of domain architecture, PKS/mFAS DH spans 983–1286 (HDVLGQLTTG…CIAYEAAIPQ (304 aa)). Catalysis depends on histidine 1015, which acts as the Proton acceptor; for dehydratase activity. Residues 1131–1286 (LPQRASGRLW…CIAYEAAIPQ (156 aa)) form a C-terminal hotdog fold region. The active-site Proton donor; for dehydratase activity is aspartate 1195. The tract at residues 1659–1964 (GRIQAGKVVF…DSICDNKIVI (306 aa)) is enoyl reductase (ER) domain. A ketoreductase (KR) domain region spans residues 1988–2163 (ATYLLVGCLG…KPACAVVLPM (176 aa)). The Carrier domain occupies 2289 to 2368 (DLVRDHFIAK…KFSELVCGAQ (80 aa)). O-(pantetheine 4'-phosphoryl)serine is present on serine 2327.

It participates in polyketide biosynthesis. Its function is as follows. Reducing polyketide synthase; part of the gene cluster that mediates the biosynthesis of depudecin, a highly oxidized eleven-carbon linear polyketide that acts as a histone deacetylase (HDAC) inhibitor and makes a small contribution to pathogenesis. The reducing polyketide synthase DEP5 is the central enzyme in depudecin biosynthesis by yielding the backbone polyketide chain. The monooxygenases DEP2 and DEP4, as well as the uncharacterized protein DEP1, then act as tailoring enzymes to modify the intermediate polyketide chain into depudecin. The chain is Reducing polyketide synthase DEP5 from Alternaria brassicicola (Dark leaf spot agent).